Reading from the N-terminus, the 117-residue chain is MARVKRGVIARARHKKVLKAAKGYYGARSRVYRVAFQAVIKAGQYAYRDRRQRKRQFRQLWIARINAAARQNSLSYSKFINGLKKASVEIDRKILADIAVFDKVAFTALVEKAKSVL.

Belongs to the bacterial ribosomal protein bL20 family.

In terms of biological role, binds directly to 23S ribosomal RNA and is necessary for the in vitro assembly process of the 50S ribosomal subunit. It is not involved in the protein synthesizing functions of that subunit. In Actinobacillus succinogenes (strain ATCC 55618 / DSM 22257 / CCUG 43843 / 130Z), this protein is Large ribosomal subunit protein bL20.